Consider the following 132-residue polypeptide: Salivary protein 15 Iper-2 (132 aa).

A signal peptide spans 1-18 (MKVVCIIVLFVIVAVNES). N-linked (GlcNAc...) asparagine glycans are attached at residues Asn24, Asn36, Asn62, Asn89, and Asn101. Residues 113-132 (GPNGQTCADKSQCVGHIPGC) form a CD4-binding region.

It belongs to the salp15 family. In terms of assembly, interacts with host CD4. Interacts with host DC-SIGN (CD209). As to quaternary structure, (Microbial infection) Interacts with Borrelia outer surface protein C (OspC). As to expression, expressed in salivary glands from feeding female ticks. Highly expressed 1 day after start of feeding, and weakly expressed at the initiation of feeding and 4 days after start of feeding.

The protein localises to the secreted. Functionally, salivary tick protein that downregulates host immune system by binding to both dendritic cells, and CD4(+) T cells. Specifically binds to the CD4 coreceptor on T cells. This interaction prevents the activation of the Src kinase, Lck, and its downstream substrate Zap-70, and results in deficient activation of PLCgamma1, the repression of calcium fluxes triggered by T-cell antigen receptor (TCR) ligation, and a subsequent reduction in interleukin-2 production. This salivary protein also binds to DC-SIGN (CD209) on dendritic cells (DC) and activates the Raf-1 kinase/MEK signaling pathway that results in down-regulating expression of pro-inflammatory cytokines. Furthermore, it inhibits T cell proliferation induced by DCs. It also inhibits in vitro keratinocyte inflammation induced by Borrelia burgdorferi or by the major outer surface protein (OspC) of Borrelia. In addition, it downregulates chemokines and monocyte chemoattractant protein 1, as well as several antimicrobial peptides such as defensins, cathelicidin, psoriasin, and RNase 7. Apart from its immunomodulatory activities, it is also associated with protection of Borrelia spirochetes from antibody-mediated killing through its binding to OspC. In vivo, tests on different immune disease animal models show promising therapeutic results, e.g., in inhibiting HIV infection, experimental autoimmune encephalomyelitis, transplantation rejection, and asthma. (Microbial infection) Protects Borrelia garinii from anti-Borrelia antibody-mediated cytotoxicity in vitro. May facilitate B.garinii transmission in mouse model. Its function is as follows. (Microbial infection) Protects Borrelia burgdorferi from anti-Borrelia antibody-mediated cytotoxicity in vitro. In terms of biological role, (Microbial infection) Protects Borrelia afzelii from anti-Borrelia antibody-mediated cytotoxicity in vitro. In Ixodes persulcatus (Taiga tick), this protein is Salivary protein 15 Iper-2.